Reading from the N-terminus, the 110-residue chain is NAD(P)H-quinone oxidoreductase subunit M (110 aa).

It belongs to the complex I NdhM subunit family. In terms of assembly, NDH-1 can be composed of about 15 different subunits; different subcomplexes with different compositions have been identified which probably have different functions.

The protein resides in the cellular thylakoid membrane. The enzyme catalyses a plastoquinone + NADH + (n+1) H(+)(in) = a plastoquinol + NAD(+) + n H(+)(out). It carries out the reaction a plastoquinone + NADPH + (n+1) H(+)(in) = a plastoquinol + NADP(+) + n H(+)(out). Its function is as follows. NDH-1 shuttles electrons from an unknown electron donor, via FMN and iron-sulfur (Fe-S) centers, to quinones in the respiratory and/or the photosynthetic chain. The immediate electron acceptor for the enzyme in this species is believed to be plastoquinone. Couples the redox reaction to proton translocation, and thus conserves the redox energy in a proton gradient. Cyanobacterial NDH-1 also plays a role in inorganic carbon-concentration. In Synechococcus elongatus (strain ATCC 33912 / PCC 7942 / FACHB-805) (Anacystis nidulans R2), this protein is NAD(P)H-quinone oxidoreductase subunit M.